The primary structure comprises 2292 residues: Protein Ycf2 (2292 aa).

1640-1647 (GSIGIGRS) is an ATP binding site.

It belongs to the Ycf2 family.

It is found in the plastid. The protein resides in the chloroplast stroma. Functionally, probable ATPase of unknown function. Its presence in a non-photosynthetic plant (Epifagus virginiana) and experiments in tobacco indicate that it has an essential function which is probably not related to photosynthesis. In Liriodendron tulipifera (Tuliptree), this protein is Protein Ycf2.